Consider the following 665-residue polypeptide: Secreted LysM effector Lys3 (665 aa).

A signal peptide spans 1-19; sequence MLWLTVSLTGFALLGVVAA. Residues N43 and N153 are each glycosylated (N-linked (GlcNAc...) asparagine). LysM domains follow at residues 166-211, 216-264, and 303-349; these read RTYT…TLCL, TLRK…YICI, and KWYV…AYCV. A glycan (N-linked (GlcNAc...) asparagine) is linked at N234. A glycan (N-linked (GlcNAc...) asparagine) is linked at N398. The LysM 4 domain maps to 409 to 454; the sequence is SWSDAAKLNSCSFIAHINGVTVSQLLQWNPSLSKDSCSLSRELYYC. Residue N531 is glycosylated (N-linked (GlcNAc...) asparagine). The disordered stretch occupies residues 585 to 610; it reads SSVSMTNSAPATATSTGGPPAPTQDG. A compositionally biased stretch (low complexity) spans 592–602; sequence SAPATATSTGG. The N-linked (GlcNAc...) asparagine glycan is linked to N614. Residues 617-663 enclose the LysM 5 domain; sequence KWHVVESGDGCWAIYTKYGITSDQLFEWNTKISKDCSNIWLGYAVCV.

The protein belongs to the secreted LysM effector family.

In terms of biological role, might have a role in sequestration of chitin oligosaccharides (breakdown products of fungal cell walls that are released during invasion and act as triggers of host immunity) to dampen host defense. The sequence is that of Secreted LysM effector Lys3 from Pochonia chlamydosporia (strain 123) (Metacordyceps chlamydosporia).